The following is a 441-amino-acid chain: Homogentisate 1,2-dioxygenase (441 aa).

H287 serves as the catalytic Proton acceptor. Fe cation is bound by residues H330 and E336. Residues Y345 and H366 each coordinate homogentisate. H366 is a binding site for Fe cation.

This sequence belongs to the homogentisate dioxygenase family. As to quaternary structure, hexamer; dimer of trimers. Requires Fe cation as cofactor.

It carries out the reaction homogentisate + O2 = 4-maleylacetoacetate + H(+). It participates in amino-acid degradation; L-phenylalanine degradation; acetoacetate and fumarate from L-phenylalanine: step 4/6. Involved in the catabolism of homogentisate (2,5-dihydroxyphenylacetate or 2,5-OH-PhAc), a central intermediate in the degradation of phenylalanine and tyrosine. Catalyzes the oxidative ring cleavage of the aromatic ring of homogentisate to yield maleylacetoacetate. The chain is Homogentisate 1,2-dioxygenase from Xanthomonas oryzae pv. oryzae (strain KACC10331 / KXO85).